The sequence spans 740 residues: Eukaryotic translation initiation factor 3 subunit B (740 aa).

Over residues 1 to 10 (MAPSFDTLSE) the composition is skewed to polar residues. The interval 1–20 (MAPSFDTLSEQDLHEEEEEE) is disordered. The RRM domain maps to 40–126 (TFVVIDGLPV…HTLLVNKLMD (87 aa)). WD repeat units follow at residues 193–230 (AHWT…KQKQ), 232–289 (PHPF…RSFV), 302–343 (EPKK…LLGK), 455–496 (SLKD…SFFA), 513–556 (IEKK…EKPE), and 571–609 (TEHY…HTFA). The disordered stretch occupies residues 696 to 721 (AYGLPEEADDPKLAKDAAATTQEQGE).

Belongs to the eIF-3 subunit B family. In terms of assembly, component of the eukaryotic translation initiation factor 3 (eIF-3) complex.

Its subcellular location is the cytoplasm. RNA-binding component of the eukaryotic translation initiation factor 3 (eIF-3) complex, which is involved in protein synthesis of a specialized repertoire of mRNAs and, together with other initiation factors, stimulates binding of mRNA and methionyl-tRNAi to the 40S ribosome. The eIF-3 complex specifically targets and initiates translation of a subset of mRNAs involved in cell proliferation. The chain is Eukaryotic translation initiation factor 3 subunit B (prt1) from Aspergillus fumigatus (strain ATCC MYA-4609 / CBS 101355 / FGSC A1100 / Af293) (Neosartorya fumigata).